The primary structure comprises 127 residues: Small ribosomal subunit protein eS8 (127 aa).

Residues 1–25 (MTIFQGKSGKKPTGGNLKQAKKKRR) form a disordered region.

Belongs to the eukaryotic ribosomal protein eS8 family. In terms of assembly, part of the 30S ribosomal subunit.

The sequence is that of Small ribosomal subunit protein eS8 from Thermoplasma volcanium (strain ATCC 51530 / DSM 4299 / JCM 9571 / NBRC 15438 / GSS1).